A 95-amino-acid polypeptide reads, in one-letter code: Nodulin (95 aa).

This is Nodulin from Striga hermonthica (Purple witchweed).